The following is a 720-amino-acid chain: MVWRRRWWRRRRRPVWRRRYRRWRRRRRWRRRPRRRRRPYRRRPYRRYGRRRKVRRRRRRTLVVRQFQPPYQRRCRVSGLEPLLYFGKKEEERHFYGNRQIMKDVDQTEGGGVTDGVFSLEELYESYQEGWNHWSASNQMLPLVRYFGCKITLYRSATDSYIFWWTNRPPFQVDRQFWVGMHPYWMLRRGRKVVMLSKQLKPFAKDHVTIKIGPPALMKTKWYFARDFCKTWLLQWRACFFNPIDPYIPRGANNTTVTFYGFPGHSYPSQSLYYTWQEHLAETNVWGITNESEKTKFEALRKAWNEQATKGPVAGYKAVLQAMNAWASVAAPGPEGSNFAKGTNVALGLANLLWLIYSQYYWQNRSPSPWGLPGATLEAMKHPEAWKPYAYKYSWSHDKGKGNRFAICDWPYKDQHGEQTTPLNFDLEIKDAPLWWCVTAAYDWAIRQGKNPANWSFFVRSDYTWPRADNIILAYSSYFADNVVKNKYADPQHATGGYFTLYRAPNLIDGREAIDIIYRNGPFAPKQEESTGNATIKYRFYFKWGGTQRPPRPQPTDPCQQPRWEGPNFPPFDGRARIDNPSDQDPRSYFWPFDTRRGSLTASAVDRVKRSLDAVTEPSETRLREGEETYGLPPPEKRARWGFPSILPTENPTDEDERYLEAEADTSSSDATDGVPETPFELLQHIQRDRDKRRELRGRLARLILRLRRRQDPELQNYYP.

Disordered regions lie at residues 546 to 569 (GTQR…GPNF) and 616 to 691 (TEPS…RDRD). Residues 652–664 (PTDEDERYLEAEA) are compositionally biased toward acidic residues.

This sequence belongs to the anelloviridae capsid protein family.

The protein localises to the virion. Its function is as follows. Self-assembles to form an icosahedral capsid with a T=1 symmetry, about 30 nm in diameter, and consisting of 60 capsid proteins. The capsid encapsulates the genomic DNA. Capsid protein is involved in attachment and entry into the host cell. This chain is Capsid protein, found in Torque teno douroucouli virus (isolate At-TTV3).